Here is a 351-residue protein sequence, read N- to C-terminus: Biotin synthase (351 aa).

One can recognise a Radical SAM core domain in the interval 73–298; sequence PEVEVEGIIS…RTILRYSGGR (226 aa). Cys88, Cys92, and Cys95 together coordinate [4Fe-4S] cluster. The [2Fe-2S] cluster site is built by Cys131, Cys164, Cys223, and Arg293.

It belongs to the radical SAM superfamily. Biotin synthase family. In terms of assembly, homodimer. Requires [4Fe-4S] cluster as cofactor. The cofactor is [2Fe-2S] cluster.

The catalysed reaction is (4R,5S)-dethiobiotin + (sulfur carrier)-SH + 2 reduced [2Fe-2S]-[ferredoxin] + 2 S-adenosyl-L-methionine = (sulfur carrier)-H + biotin + 2 5'-deoxyadenosine + 2 L-methionine + 2 oxidized [2Fe-2S]-[ferredoxin]. The protein operates within cofactor biosynthesis; biotin biosynthesis; biotin from 7,8-diaminononanoate: step 2/2. In terms of biological role, catalyzes the conversion of dethiobiotin (DTB) to biotin by the insertion of a sulfur atom into dethiobiotin via a radical-based mechanism. This is Biotin synthase from Frankia alni (strain DSM 45986 / CECT 9034 / ACN14a).